Reading from the N-terminus, the 213-residue chain is Cell division protein SepF 2 (213 aa).

Positions 16-89 (EDDGYDGRGF…ASLAAESSRP (74 aa)) are disordered. The span at 27–39 (PDDDFEPELDPEP) shows a compositional bias: acidic residues.

The protein belongs to the SepF family. Homodimer. Interacts with FtsZ.

The protein localises to the cytoplasm. Functionally, cell division protein that is part of the divisome complex and is recruited early to the Z-ring. Probably stimulates Z-ring formation, perhaps through the cross-linking of FtsZ protofilaments. Its function overlaps with FtsA. The chain is Cell division protein SepF 2 from Streptomyces coelicolor (strain ATCC BAA-471 / A3(2) / M145).